The sequence spans 214 residues: Adenylate kinase (214 aa).

11–16 (GTGKGT) provides a ligand contact to ATP. Residues 31 to 61 (SSGDLFRFYAKEEKTALAEEIKSYINNGLYV) are NMP. Residues S32, R37, 59–61 (LYV), 87–90 (GYPR), and Q94 each bind AMP. The segment at 124 to 163 (LRRSCPQCKRIYNINSVDFKPKVANLCDLCKVELIHRKDD) is LID. Residue R125 participates in ATP binding. Zn(2+) contacts are provided by C128 and C131. 134–135 (IY) lines the ATP pocket. Residues C150 and C153 each contribute to the Zn(2+) site. The AMP site is built by R160 and R171. Position 199 (K199) interacts with ATP.

This sequence belongs to the adenylate kinase family. As to quaternary structure, monomer.

The protein localises to the cytoplasm. It carries out the reaction AMP + ATP = 2 ADP. It functions in the pathway purine metabolism; AMP biosynthesis via salvage pathway; AMP from ADP: step 1/1. In terms of biological role, catalyzes the reversible transfer of the terminal phosphate group between ATP and AMP. Plays an important role in cellular energy homeostasis and in adenine nucleotide metabolism. In Mycoplasmoides gallisepticum (strain R(low / passage 15 / clone 2)) (Mycoplasma gallisepticum), this protein is Adenylate kinase.